The following is a 213-amino-acid chain: MLGSPPDMGKPYRPKDHYFQKAKQEGLRARSAFKVDELIKRFPMVKKGHVVLDLGAAPGGFLQILADAVGPKGRVIGVDIVAIRPFSQPFVQTAVLDVLADDFDAKLTELHAGPFDAVISDMAPKTSGIKATDEARSLRLAGKALELAAARGRPGSSFVAKVFMGRDFEDFRNQIRALFEEVKVVRPEATRGASMEVYLVGLRRRAPEAPEAN.

Positions 59, 61, 79, 97, and 121 each coordinate S-adenosyl-L-methionine. Lys-161 serves as the catalytic Proton acceptor.

This sequence belongs to the class I-like SAM-binding methyltransferase superfamily. RNA methyltransferase RlmE family.

The protein resides in the cytoplasm. It carries out the reaction uridine(2552) in 23S rRNA + S-adenosyl-L-methionine = 2'-O-methyluridine(2552) in 23S rRNA + S-adenosyl-L-homocysteine + H(+). Functionally, specifically methylates the uridine in position 2552 of 23S rRNA at the 2'-O position of the ribose in the fully assembled 50S ribosomal subunit. This chain is Ribosomal RNA large subunit methyltransferase E, found in Myxococcus xanthus (strain DK1622).